We begin with the raw amino-acid sequence, 113 residues long: U11-theraphotoxin-Hhn1a (113 aa).

A signal peptide spans 1–21; that stretch reads MDTVRVAFLLVLVLAVSLGQA. A propeptide spanning residues 22 to 74 is cleaved from the precursor; the sequence is DKDENRMEMQEKTEQGKSYLDFAENLLLQKLEELEAKLLEEDSEESRNSRQKR. A compositionally biased stretch (basic and acidic residues) spans 60–69; that stretch reads LEEDSEESRN. The segment at 60–83 is disordered; sequence LEEDSEESRNSRQKRCIGEGVPCD. 3 disulfide bridges follow: C75–C90, C82–C95, and C89–C110.

This sequence belongs to the neurotoxin 14 (magi-1) family. 01 (HNTX-16) subfamily. Expressed by the venom gland.

It is found in the secreted. In terms of biological role, probable ion channel inhibitor. The protein is U11-theraphotoxin-Hhn1a of Cyriopagopus hainanus (Chinese bird spider).